A 95-amino-acid chain; its full sequence is Aspartyl/glutamyl-tRNA(Asn/Gln) amidotransferase subunit C (95 aa).

The protein belongs to the GatC family. Heterotrimer of A, B and C subunits.

It catalyses the reaction L-glutamyl-tRNA(Gln) + L-glutamine + ATP + H2O = L-glutaminyl-tRNA(Gln) + L-glutamate + ADP + phosphate + H(+). The catalysed reaction is L-aspartyl-tRNA(Asn) + L-glutamine + ATP + H2O = L-asparaginyl-tRNA(Asn) + L-glutamate + ADP + phosphate + 2 H(+). Functionally, allows the formation of correctly charged Asn-tRNA(Asn) or Gln-tRNA(Gln) through the transamidation of misacylated Asp-tRNA(Asn) or Glu-tRNA(Gln) in organisms which lack either or both of asparaginyl-tRNA or glutaminyl-tRNA synthetases. The reaction takes place in the presence of glutamine and ATP through an activated phospho-Asp-tRNA(Asn) or phospho-Glu-tRNA(Gln). This is Aspartyl/glutamyl-tRNA(Asn/Gln) amidotransferase subunit C from Geobacter sp. (strain M21).